A 124-amino-acid polypeptide reads, in one-letter code: Putative membrane protein insertion efficiency factor (124 aa).

The segment at 1-24 is disordered; sequence MHDPHGHAHTVRPPGRGRNWPGPW. Residues 12 to 24 show a composition bias toward low complexity; that stretch reads RPPGRGRNWPGPW.

This sequence belongs to the UPF0161 family.

The protein localises to the cell inner membrane. Its function is as follows. Could be involved in insertion of integral membrane proteins into the membrane. The protein is Putative membrane protein insertion efficiency factor of Mesorhizobium japonicum (strain LMG 29417 / CECT 9101 / MAFF 303099) (Mesorhizobium loti (strain MAFF 303099)).